We begin with the raw amino-acid sequence, 363 residues long: Phosphoserine aminotransferase (363 aa).

Arg42 provides a ligand contact to L-glutamate. Residues 76–77 (GR), Trp102, Thr156, Asp175, and Gln198 each bind pyridoxal 5'-phosphate. An N6-(pyridoxal phosphate)lysine modification is found at Lys199. 240–241 (NT) is a pyridoxal 5'-phosphate binding site.

Belongs to the class-V pyridoxal-phosphate-dependent aminotransferase family. SerC subfamily. As to quaternary structure, homodimer. Pyridoxal 5'-phosphate is required as a cofactor.

It localises to the cytoplasm. It catalyses the reaction O-phospho-L-serine + 2-oxoglutarate = 3-phosphooxypyruvate + L-glutamate. The catalysed reaction is 4-(phosphooxy)-L-threonine + 2-oxoglutarate = (R)-3-hydroxy-2-oxo-4-phosphooxybutanoate + L-glutamate. Its pathway is amino-acid biosynthesis; L-serine biosynthesis; L-serine from 3-phospho-D-glycerate: step 2/3. It participates in cofactor biosynthesis; pyridoxine 5'-phosphate biosynthesis; pyridoxine 5'-phosphate from D-erythrose 4-phosphate: step 3/5. Functionally, catalyzes the reversible conversion of 3-phosphohydroxypyruvate to phosphoserine and of 3-hydroxy-2-oxo-4-phosphonooxybutanoate to phosphohydroxythreonine. This chain is Phosphoserine aminotransferase, found in Shewanella sp. (strain W3-18-1).